Reading from the N-terminus, the 292-residue chain is 4-hydroxy-tetrahydrodipicolinate synthase (292 aa).

Thr-45 is a pyruvate binding site. Residue Tyr-133 is the Proton donor/acceptor of the active site. The active-site Schiff-base intermediate with substrate is the Lys-161. Pyruvate is bound at residue Ile-203.

It belongs to the DapA family. Homotetramer; dimer of dimers.

The protein resides in the cytoplasm. It catalyses the reaction L-aspartate 4-semialdehyde + pyruvate = (2S,4S)-4-hydroxy-2,3,4,5-tetrahydrodipicolinate + H2O + H(+). It functions in the pathway amino-acid biosynthesis; L-lysine biosynthesis via DAP pathway; (S)-tetrahydrodipicolinate from L-aspartate: step 3/4. Its function is as follows. Catalyzes the condensation of (S)-aspartate-beta-semialdehyde [(S)-ASA] and pyruvate to 4-hydroxy-tetrahydrodipicolinate (HTPA). The sequence is that of 4-hydroxy-tetrahydrodipicolinate synthase from Nitrosomonas eutropha (strain DSM 101675 / C91 / Nm57).